We begin with the raw amino-acid sequence, 165 residues long: 6,7-dimethyl-8-ribityllumazine synthase 2 (165 aa).

5-amino-6-(D-ribitylamino)uracil contacts are provided by residues W24, 56-58 (SFE), and 80-82 (LVV). The active-site Proton donor is R88. Position 113 (S113) interacts with 5-amino-6-(D-ribitylamino)uracil. A (2S)-2-hydroxy-3-oxobutyl phosphate-binding site is contributed by H127.

It belongs to the DMRL synthase family.

The catalysed reaction is (2S)-2-hydroxy-3-oxobutyl phosphate + 5-amino-6-(D-ribitylamino)uracil = 6,7-dimethyl-8-(1-D-ribityl)lumazine + phosphate + 2 H2O + H(+). The protein operates within cofactor biosynthesis; riboflavin biosynthesis; riboflavin from 2-hydroxy-3-oxobutyl phosphate and 5-amino-6-(D-ribitylamino)uracil: step 1/2. Catalyzes the formation of 6,7-dimethyl-8-ribityllumazine by condensation of 5-amino-6-(D-ribitylamino)uracil with 3,4-dihydroxy-2-butanone 4-phosphate. This is the penultimate step in the biosynthesis of riboflavin. The protein is 6,7-dimethyl-8-ribityllumazine synthase 2 of Bradyrhizobium diazoefficiens (strain JCM 10833 / BCRC 13528 / IAM 13628 / NBRC 14792 / USDA 110).